The primary structure comprises 951 residues: Serine/threonine-protein kinase ATG1 (951 aa).

The region spanning 22 to 327 (FTINEEIGKG…FPEYFAHPVV (306 aa)) is the Protein kinase domain. ATP contacts are provided by residues 28-36 (IGKGSFATV) and Lys51. Asp165 functions as the Proton acceptor in the catalytic mechanism. Disordered stretches follow at residues 343–375 (IITP…PVET), 387–458 (EQAP…YDEQ), 514–573 (HIPK…SSPS), and 924–951 (HQSM…TPPH). Composition is skewed to basic and acidic residues over residues 359 to 368 (SLRERQRENP) and 432 to 442 (PRQRDRTERHY). Polar residues-rich tracts occupy residues 547 to 573 (AQGN…SSPS) and 939 to 951 (GGTT…TPPH).

This sequence belongs to the protein kinase superfamily. Ser/Thr protein kinase family. APG1/unc-51/ULK1 subfamily. In terms of assembly, homodimer. Forms a ternary complex with ATG13 and ATG17.

It localises to the cytoplasm. Its subcellular location is the preautophagosomal structure membrane. The catalysed reaction is L-seryl-[protein] + ATP = O-phospho-L-seryl-[protein] + ADP + H(+). The enzyme catalyses L-threonyl-[protein] + ATP = O-phospho-L-threonyl-[protein] + ADP + H(+). Its function is as follows. Serine/threonine protein kinase involved in the cytoplasm to vacuole transport (Cvt) and found to be essential in autophagy, where it is required for the formation of autophagosomes. Involved in the clearance of protein aggregates which cannot be efficiently cleared by the proteasome. Required for selective autophagic degradation of the nucleus (nucleophagy) as well as for mitophagy which contributes to regulate mitochondrial quantity and quality by eliminating the mitochondria to a basal level to fulfill cellular energy requirements and preventing excess ROS production. Also involved in endoplasmic reticulum-specific autophagic process, in selective removal of ER-associated degradation (ERAD) substrates. Plays a key role in ATG9 and ATG23 cycling through the pre-autophagosomal structure and is necessary to promote ATG18 binding to ATG9 through phosphorylation of ATG9. Catalyzes phosphorylation of ATG4, decreasing the interaction between ATG4 and ATG8 and impairing deconjugation of PE-conjugated forms of ATG8. This is Serine/threonine-protein kinase ATG1 from Sclerotinia sclerotiorum (strain ATCC 18683 / 1980 / Ss-1) (White mold).